The primary structure comprises 398 residues: Phosphoglycerate kinase (398 aa).

Substrate contacts are provided by residues 21–23 (DFN), R36, 59–62 (HLGR), R119, and R157. ATP contacts are provided by residues K208, G296, E327, and 354–357 (GGDS).

This sequence belongs to the phosphoglycerate kinase family. Monomer.

It is found in the cytoplasm. It catalyses the reaction (2R)-3-phosphoglycerate + ATP = (2R)-3-phospho-glyceroyl phosphate + ADP. Its pathway is carbohydrate degradation; glycolysis; pyruvate from D-glyceraldehyde 3-phosphate: step 2/5. The chain is Phosphoglycerate kinase from Streptococcus equi subsp. zooepidemicus (strain H70).